The following is a 360-amino-acid chain: 4-hydroxy-3-methylbut-2-en-1-yl diphosphate synthase (flavodoxin) (360 aa).

[4Fe-4S] cluster is bound by residues cysteine 265, cysteine 268, cysteine 300, and glutamate 307.

Belongs to the IspG family. The cofactor is [4Fe-4S] cluster.

The enzyme catalyses (2E)-4-hydroxy-3-methylbut-2-enyl diphosphate + oxidized [flavodoxin] + H2O + 2 H(+) = 2-C-methyl-D-erythritol 2,4-cyclic diphosphate + reduced [flavodoxin]. It functions in the pathway isoprenoid biosynthesis; isopentenyl diphosphate biosynthesis via DXP pathway; isopentenyl diphosphate from 1-deoxy-D-xylulose 5-phosphate: step 5/6. Converts 2C-methyl-D-erythritol 2,4-cyclodiphosphate (ME-2,4cPP) into 1-hydroxy-2-methyl-2-(E)-butenyl 4-diphosphate. The protein is 4-hydroxy-3-methylbut-2-en-1-yl diphosphate synthase (flavodoxin) of Brevibacillus brevis (strain 47 / JCM 6285 / NBRC 100599).